The sequence spans 397 residues: Probable N-succinyldiaminopimelate aminotransferase DapC (397 aa).

Residues 109–110 (GS) and 218–222 (DGMAE) each bind pyridoxal 5'-phosphate. Position 232 is an N6-(pyridoxal phosphate)lysine (lysine 232).

It belongs to the class-III pyridoxal-phosphate-dependent aminotransferase family. Homodimer. It depends on pyridoxal 5'-phosphate as a cofactor.

The protein resides in the cytoplasm. The catalysed reaction is N-succinyl-(2S,6S)-2,6-diaminopimelate + 2-oxoglutarate = (S)-2-succinylamino-6-oxoheptanedioate + L-glutamate. The protein operates within amino-acid biosynthesis; L-lysine biosynthesis via DAP pathway; LL-2,6-diaminopimelate from (S)-tetrahydrodipicolinate (succinylase route): step 2/3. Functionally, involved in the lysine biosynthetic pathways. It catalyzes the transfer of an amino group from L-glutamate to N-succinyl-2-l-amino-6-oxoheptanedioate (N-succinyl-2-l-amino-6-ketopimelate) in a PLP-dependent reaction, yielding as products N-succinyl-l-2,6-diaminoheptanedioate (N-succinyl-diaminopimelate) and 2-oxoglutarate. This is Probable N-succinyldiaminopimelate aminotransferase DapC (dapC) from Mycobacterium tuberculosis (strain CDC 1551 / Oshkosh).